The chain runs to 261 residues: Triosephosphate isomerase (261 aa).

10-12 (NWK) is a binding site for substrate. The active-site Electrophile is the His100. Glu172 (proton acceptor) is an active-site residue. Residues Gly178, Ser218, and 239–240 (GG) contribute to the substrate site.

Belongs to the triosephosphate isomerase family. Homodimer.

The protein resides in the cytoplasm. It catalyses the reaction D-glyceraldehyde 3-phosphate = dihydroxyacetone phosphate. Its pathway is carbohydrate biosynthesis; gluconeogenesis. It participates in carbohydrate degradation; glycolysis; D-glyceraldehyde 3-phosphate from glycerone phosphate: step 1/1. Its function is as follows. Involved in the gluconeogenesis. Catalyzes stereospecifically the conversion of dihydroxyacetone phosphate (DHAP) to D-glyceraldehyde-3-phosphate (G3P). The sequence is that of Triosephosphate isomerase from Mycobacteroides abscessus (strain ATCC 19977 / DSM 44196 / CCUG 20993 / CIP 104536 / JCM 13569 / NCTC 13031 / TMC 1543 / L948) (Mycobacterium abscessus).